The following is a 191-amino-acid chain: Ferric nitrobindin-like protein (191 aa).

Residues 20-26 (GDWAGAG) carry the GXWXGXG motif.

The protein belongs to the nitrobindin family.

The sequence is that of Ferric nitrobindin-like protein from Streptomyces coelicolor (strain ATCC BAA-471 / A3(2) / M145).